Reading from the N-terminus, the 1320-residue chain is Bifunctional protein PutA (1320 aa).

The interval Leu228 to Thr574 is proline dehydrogenase. The segment at Gln653 to Asn1119 is aldehyde dehydrogenase. Active-site residues include Glu883 and Cys917.

In the N-terminal section; belongs to the proline dehydrogenase family. It in the C-terminal section; belongs to the aldehyde dehydrogenase family. FAD is required as a cofactor.

It catalyses the reaction L-proline + a quinone = (S)-1-pyrroline-5-carboxylate + a quinol + H(+). The catalysed reaction is L-glutamate 5-semialdehyde + NAD(+) + H2O = L-glutamate + NADH + 2 H(+). The protein operates within amino-acid degradation; L-proline degradation into L-glutamate; L-glutamate from L-proline: step 1/2. Its pathway is amino-acid degradation; L-proline degradation into L-glutamate; L-glutamate from L-proline: step 2/2. In terms of biological role, oxidizes proline to glutamate for use as a carbon and nitrogen source and also function as a transcriptional repressor of the put operon. The polypeptide is Bifunctional protein PutA (putA) (Salmonella typhimurium (strain LT2 / SGSC1412 / ATCC 700720)).